We begin with the raw amino-acid sequence, 345 residues long: Beta-2-glycoprotein 1 (345 aa).

The N-terminal stretch at 1–19 (MPPPALVLLLGFLCHVAIA) is a signal peptide. Sushi domains are found at residues 21–81 (RTCP…KCMP), 82–139 (RVCP…VCAP), 140–202 (ITCP…ECRE), and 203–262 (VRCP…SCKA). Disulfide bonds link cysteine 23-cysteine 66, cysteine 51-cysteine 79, cysteine 84-cysteine 124, cysteine 110-cysteine 137, cysteine 142-cysteine 188, cysteine 174-cysteine 200, cysteine 205-cysteine 248, cysteine 234-cysteine 260, cysteine 264-cysteine 315, cysteine 300-cysteine 325, and cysteine 307-cysteine 345. Threonine 33 is a glycosylation site (O-linked (GalNAc...) threonine). Asparagine 92 is a glycosylation site (N-linked (GlcNAc...) asparagine). N-linked (GlcNAc...) asparagine glycosylation is found at asparagine 162, asparagine 183, and asparagine 193. Asparagine 253 is a glycosylation site (N-linked (GlcNAc...) asparagine). Positions 263–345 (SCKLSIKRAT…KTDASDVKPC (83 aa)) are sushi-like.

As to expression, expressed by the liver and secreted in plasma.

It localises to the secreted. In terms of biological role, binds to various kinds of negatively charged substances such as heparin, phospholipids, and dextran sulfate. May prevent activation of the intrinsic blood coagulation cascade by binding to phospholipids on the surface of damaged cells. The chain is Beta-2-glycoprotein 1 (APOH) from Bos taurus (Bovine).